We begin with the raw amino-acid sequence, 224 residues long: Small ribosomal subunit protein uS3 (224 aa).

A KH type-2 domain is found at 39–107 (VRKYIQNALA…PVHINIEEIR (69 aa)).

This sequence belongs to the universal ribosomal protein uS3 family. In terms of assembly, part of the 30S ribosomal subunit. Forms a tight complex with proteins S10 and S14.

Functionally, binds the lower part of the 30S subunit head. Binds mRNA in the 70S ribosome, positioning it for translation. In Saccharophagus degradans (strain 2-40 / ATCC 43961 / DSM 17024), this protein is Small ribosomal subunit protein uS3.